A 192-amino-acid polypeptide reads, in one-letter code: Thymidine kinase (192 aa).

ATP contacts are provided by residues 9–16 and 87–90; these read SAMNAGKS and DECQ. Residue Glu88 is the Proton acceptor of the active site. Zn(2+) is bound by residues Cys145, Cys147, Cys182, and His185.

It belongs to the thymidine kinase family. As to quaternary structure, homotetramer.

It is found in the cytoplasm. The enzyme catalyses thymidine + ATP = dTMP + ADP + H(+). The sequence is that of Thymidine kinase from Vibrio vulnificus (strain YJ016).